Consider the following 498-residue polypeptide: MRLPYILALDQGTTSSRAIVFDQDGVVRSVAQREFTQIFPQAGWVEHDPEEIWASQISVAVEALSRAELRSRHVAAIAITNQRETAVVWDRETGRPVYNAIVWQDRRTAGFCDQLKAAGHEEFVQQRTGLLIDSYFSGSKVRWILDNVPQARSLAERGRLAFGTVDSWLIWKLTSGKLHITDVSNASRTMLFNIHTCQWDEELLRLLEIPASMLPEVRSSSEVYGTVQTSLGLESIPIAGIAGDQQASLFGQRCTSPGMAKNTYGTGCFMLQNTGERAVPTSNRLVTTVAWKIGDVVEYALEGSVFIGGAVVQWLRDGLRLVRSSGEFQELANSVKDNGGVYVVPAFVGLGAPHWDQYARGGIFGITRGTTDGHVARAALESIAYQVADLLDAMQRDTGVPLPELRVDGGAAANETLLQFQADIMGVPVVRPSVTETTALGAAFLAGIAVGLWSDPQVIAKMPVEQKRFEPRMGSAEALALRHQWEKALSRVKGWEEA.

T13 is an ADP binding site. Positions 13, 14, and 15 each coordinate ATP. Position 13 (T13) interacts with sn-glycerol 3-phosphate. R17 contacts ADP. The sn-glycerol 3-phosphate site is built by R83, E84, Y135, and D244. Positions 83, 84, 135, 244, and 245 each coordinate glycerol. Residues T266 and G309 each coordinate ADP. Residues T266, G309, Q313, and G410 each coordinate ATP. Residues G410 and N414 each contribute to the ADP site.

Belongs to the FGGY kinase family.

The catalysed reaction is glycerol + ATP = sn-glycerol 3-phosphate + ADP + H(+). It participates in polyol metabolism; glycerol degradation via glycerol kinase pathway; sn-glycerol 3-phosphate from glycerol: step 1/1. Its activity is regulated as follows. Inhibited by fructose 1,6-bisphosphate (FBP). Functionally, key enzyme in the regulation of glycerol uptake and metabolism. Catalyzes the phosphorylation of glycerol to yield sn-glycerol 3-phosphate. The sequence is that of Glycerol kinase from Koribacter versatilis (strain Ellin345).